An 863-amino-acid polypeptide reads, in one-letter code: Leucine--tRNA ligase (863 aa).

The short motif at 42 to 52 (PYPSGKIHMGH) is the 'HIGH' region element. A 'KMSKS' region motif is present at residues 618–622 (KMSKS). Residue K621 participates in ATP binding.

The protein belongs to the class-I aminoacyl-tRNA synthetase family.

The protein localises to the cytoplasm. It carries out the reaction tRNA(Leu) + L-leucine + ATP = L-leucyl-tRNA(Leu) + AMP + diphosphate. The sequence is that of Leucine--tRNA ligase from Desulfatibacillum aliphaticivorans.